Consider the following 471-residue polypeptide: Mitochondrial distribution and morphology protein 10 (471 aa).

The interval 313–338 (SNSAATPPRIKNSDSQVLSNNSTDSK) is disordered. Positions 325–338 (SDSQVLSNNSTDSK) are enriched in polar residues.

It belongs to the MDM10 family. Component of the ER-mitochondria encounter structure (ERMES) or MDM complex, composed of MMM1, MDM10, MDM12 and MDM34. Associates with the mitochondrial outer membrane sorting assembly machinery SAM(core) complex.

The protein resides in the mitochondrion outer membrane. In terms of biological role, component of the ERMES/MDM complex, which serves as a molecular tether to connect the endoplasmic reticulum and mitochondria. Components of this complex are involved in the control of mitochondrial shape and protein biogenesis and may function in phospholipid exchange. MDM10 is involved in the late assembly steps of the general translocase of the mitochondrial outer membrane (TOM complex). Functions in the TOM40-specific route of the assembly of outer membrane beta-barrel proteins, including the association of TOM40 with the receptor TOM22 and small TOM proteins. Can associate with the SAM(core) complex as well as the MDM12-MMM1 complex, both involved in late steps of the major beta-barrel assembly pathway, that is responsible for biogenesis of all outer membrane beta-barrel proteins. May act as a switch that shuttles between both complexes and channels precursor proteins into the TOM40-specific pathway. Plays a role in mitochondrial morphology and in the inheritance of mitochondria. This Debaryomyces hansenii (strain ATCC 36239 / CBS 767 / BCRC 21394 / JCM 1990 / NBRC 0083 / IGC 2968) (Yeast) protein is Mitochondrial distribution and morphology protein 10.